Here is a 108-residue protein sequence, read N- to C-terminus: X antigen family member 5 (108 aa).

Positions 20-108 (VGPMLEPSVP…PEGGEGKPQL (89 aa)) are disordered. Basic and acidic residues-rich tracts occupy residues 40-52 (SQDHTPGQKREDD) and 94-108 (EQFKMPEGGEGKPQL).

Belongs to the GAGE family.

The polypeptide is X antigen family member 5 (XAGE5) (Homo sapiens (Human)).